Reading from the N-terminus, the 295-residue chain is Protease HtpX (295 aa).

Helical transmembrane passes span 4–24 and 42–62; these read ILLF…TLSL and QLLV…LFIS. Histidine 147 is a Zn(2+) binding site. The active site involves glutamate 148. Zn(2+) is bound at residue histidine 151. 2 helical membrane passes run 158–178 and 199–219; these read VTLA…ARII and ITTI…VMWF. Glutamate 224 lines the Zn(2+) pocket.

Belongs to the peptidase M48B family. Zn(2+) is required as a cofactor.

The protein resides in the cell inner membrane. The polypeptide is Protease HtpX (Pseudomonas savastanoi pv. phaseolicola (strain 1448A / Race 6) (Pseudomonas syringae pv. phaseolicola (strain 1448A / Race 6))).